The sequence spans 117 residues: Probable non-functional immunoglobulin heavy variable 3-16 (117 aa).

Positions 1–19 (MEFGLSWVFLAGILKGVQC) are cleaved as a signal peptide. The segment at 20-44 (EVQLVESGGGLVQPGGSLRLSCAAS) is framework-1. Residues 21 to 117 (VQLVESGGGL…EDMAVYYCVR (97 aa)) enclose the Ig-like domain. A disulfide bridge connects residues Cys41 and Cys115. Residues 45 to 52 (GFTFSNSD) form a complementarity-determining-1 region. The tract at residues 53 to 69 (MNWARKAPGKGLEWVSG) is framework-2. A complementarity-determining-2 region spans residues 70-77 (VSWNGSRT). Asn73 carries N-linked (GlcNAc...) asparagine glycosylation. A framework-3 region spans residues 78 to 115 (HYVDSVKRRFIISRDNSRNSLYLQKNRRRAEDMAVYYC). The complementarity-determining-3 stretch occupies residues 116-117 (VR).

In terms of assembly, immunoglobulins are composed of two identical heavy chains and two identical light chains; disulfide-linked.

The protein resides in the secreted. It localises to the cell membrane. In terms of biological role, probable non-functional open reading frame (ORF) of V region of the variable domain of immunoglobulin heavy chains. Non-functional ORF generally cannot participate in the synthesis of a productive immunoglobulin chain due to altered V-(D)-J or switch recombination and/or splicing site (at mRNA level) and/or conserved amino acid change (protein level). Immunoglobulins, also known as antibodies, are membrane-bound or secreted glycoproteins produced by B lymphocytes. In the recognition phase of humoral immunity, the membrane-bound immunoglobulins serve as receptors which, upon binding of a specific antigen, trigger the clonal expansion and differentiation of B lymphocytes into immunoglobulins-secreting plasma cells. Secreted immunoglobulins mediate the effector phase of humoral immunity, which results in the elimination of bound antigens. The antigen binding site is formed by the variable domain of one heavy chain, together with that of its associated light chain. Thus, each immunoglobulin has two antigen binding sites with remarkable affinity for a particular antigen. The variable domains are assembled by a process called V-(D)-J rearrangement and can then be subjected to somatic hypermutations which, after exposure to antigen and selection, allow affinity maturation for a particular antigen. The chain is Probable non-functional immunoglobulin heavy variable 3-16 from Homo sapiens (Human).